The sequence spans 317 residues: MKNLNIIFAGTPDFAAQHLQALLASNHNVIAVYTQPDKPAGRGKKLQASPVKQLAQQHNLPVYQPKSLRNEEAQSELAALNADVMVVVAYGLILPKAVLEAPRLGCLNVHGSILPRWRGAAPIQRAIWAGDKQTGVTVMQMNEGLDTGDMLHKVYCEITPQETSATLYQKLAQLAPSALIEVLDHLEDGSFQPQVQDDSQSCYADKLTKEEAKLDWTLPAAQLERNIRAFNPAPTAFLTLNLNGNEERIKIYQADVLPHQEKAAGTVLACDKKGVQIATADGVLNITRLQPSGKKPMSVQDFLNGRADWFQAGNVLS.

Position 112-115 (112-115) interacts with (6S)-5,6,7,8-tetrahydrofolate; that stretch reads SILP.

This sequence belongs to the Fmt family.

The enzyme catalyses L-methionyl-tRNA(fMet) + (6R)-10-formyltetrahydrofolate = N-formyl-L-methionyl-tRNA(fMet) + (6S)-5,6,7,8-tetrahydrofolate + H(+). Functionally, attaches a formyl group to the free amino group of methionyl-tRNA(fMet). The formyl group appears to play a dual role in the initiator identity of N-formylmethionyl-tRNA by promoting its recognition by IF2 and preventing the misappropriation of this tRNA by the elongation apparatus. The sequence is that of Methionyl-tRNA formyltransferase from Actinobacillus succinogenes (strain ATCC 55618 / DSM 22257 / CCUG 43843 / 130Z).